Consider the following 595-residue polypeptide: uncharacterized protein (595 aa).

Disordered stretches follow at residues 50-159, 398-430, and 450-595; these read VNPS…KTKK, TYPTTPLFSEPTIPKPPQQPTTEPPSGFKPPSL, and VTEG…SLDK. A compositionally biased stretch (low complexity) spans 83-122; it reads SNKSSALKKSNKSSNKSSNKSSNKSSNKSSNKSSNKSSNK. The span at 123-132 shows a compositional bias: basic and acidic residues; the sequence is FPDKSDKSDS. Residues 137 to 146 show a composition bias toward acidic residues; that stretch reads DNSDDSDDSS. The span at 398 to 409 shows a compositional bias: low complexity; sequence TYPTTPLFSEPT. The segment covering 410 to 420 has biased composition (pro residues); it reads IPKPPQQPTTE. Residues 421–430 are compositionally biased toward low complexity; the sequence is PPSGFKPPSL. Residues 454–463 show a composition bias toward basic and acidic residues; sequence KVVESDDHTS. The span at 467-476 shows a compositional bias: pro residues; sequence IPPPPPPPPS. Residues 477-529 are compositionally biased toward low complexity; the sequence is ISSDNSSPNKSVKSSTKSSTKSSTKSSTKSSTKSSTKSPSKTPVKSPIKSSSK. The span at 530–542 shows a compositional bias: basic and acidic residues; that stretch reads LSDKKSPTKKIES. Positions 544–553 are enriched in acidic residues; that stretch reads GESDSESDSE. Basic residues predominate over residues 559–570; that stretch reads TKKSTNKIKKIT. Residues 571 to 580 are compositionally biased toward low complexity; sequence NNKLENSNTK. A compositionally biased stretch (basic residues) spans 581-595; the sequence is NNKKFSKKKTISLDK.

This is an uncharacterized protein from Acanthamoeba polyphaga mimivirus (APMV).